Reading from the N-terminus, the 393-residue chain is Rhizopuspepsin (393 aa).

The signal sequence occupies residues 1–21 (MKFTLISSCIAIAALAVAVDA). Residues 22 to 68 (APGEKKISIPLAKNPNYKPSAKNAIQKAIAKYNKHKINTSTGGIVPD) constitute a propeptide, activation peptide. In terms of domain architecture, Peptidase A1 spans 85 to 389 (YYGQVTIGTP…NQGVPEVQIA (305 aa)). Residue Asp103 is part of the active site. Cysteines 116 and 119 form a disulfide. Asp286 is an active-site residue. A disulfide bond links Cys320 and Cys353.

Belongs to the peptidase A1 family.

The enzyme catalyses Hydrolysis of proteins with broad specificity similar to that of pepsin A, preferring hydrophobic residues at P1 and P1'. Clots milk and activates trypsinogen. Does not cleave 4-Gln-|-His-5, but does cleave 10-His-|-Leu-11 and 12-Val-|-Glu-13 in B chain of insulin.. This is Rhizopuspepsin from Rhizopus chinensis (Bread mold).